A 102-amino-acid chain; its full sequence is NADH-quinone oxidoreductase subunit K (102 aa).

3 helical membrane passes run 6–26 (LIGM…GVLA), 30–50 (ILFQ…AFVA), and 63–83 (MLIL…ALLL).

This sequence belongs to the complex I subunit 4L family. In terms of assembly, NDH-1 is composed of 14 different subunits. Subunits NuoA, H, J, K, L, M, N constitute the membrane sector of the complex.

It localises to the cell inner membrane. It catalyses the reaction a quinone + NADH + 5 H(+)(in) = a quinol + NAD(+) + 4 H(+)(out). NDH-1 shuttles electrons from NADH, via FMN and iron-sulfur (Fe-S) centers, to quinones in the respiratory chain. The immediate electron acceptor for the enzyme in this species is believed to be ubiquinone. Couples the redox reaction to proton translocation (for every two electrons transferred, four hydrogen ions are translocated across the cytoplasmic membrane), and thus conserves the redox energy in a proton gradient. The chain is NADH-quinone oxidoreductase subunit K from Rhodopseudomonas palustris (strain HaA2).